The primary structure comprises 337 residues: uncharacterized protein (337 aa).

2 helical membrane-spanning segments follow: residues F4 to I24 and L26 to L46.

It belongs to the plectrovirus ORF2 family.

It is found in the host membrane. This is an uncharacterized protein from Spiroplasma virus SpV1-R8A2 B (SpV1).